Consider the following 347-residue polypeptide: Globoside alpha-1,3-N-acetylgalactosaminyltransferase 1 (347 aa).

Residues Met1–Arg5 are Cytoplasmic-facing. Residues Leu6–Tyr26 traverse the membrane as a helical; Signal-anchor for type II membrane protein segment. Residues Met27–Ser347 lie on the Lumenal side of the membrane. Asn108 carries N-linked (GlcNAc...) asparagine glycosylation. Residues Phe116–Tyr121, Asp206–Asp208, and His228–Tyr231 each bind substrate. The Mn(2+) site is built by Asp206 and Asp208. Residue Glu298 is the Nucleophile of the active site.

The protein belongs to the glycosyltransferase 6 family. The cofactor is Mn(2+).

It is found in the golgi apparatus membrane. It catalyses the reaction a globoside Gb4Cer (d18:1(4E)) + UDP-N-acetyl-alpha-D-galactosamine = a globoside Forssman (d18:1(4E)) + UDP + H(+). It carries out the reaction a globoside Gb4Cer + UDP-N-acetyl-alpha-D-galactosamine = a globoside IV3GalNAc-Gb4Cer + UDP + H(+). Its pathway is protein modification; protein glycosylation. Its function is as follows. Catalyzes the formation of Forssman glycolipid via the addition of N-acetylgalactosamine (GalNAc) in alpha-1,3-linkage to GalNAcb-1,3Gala-1,4Galb-1,4GlcCer (Gb4Cer). Forssman glycolipid (also called Forssman antigen; FG) probably serves for adherence of some pathogens such as E.coli uropathogenic strains. The protein is Globoside alpha-1,3-N-acetylgalactosaminyltransferase 1 of Canis lupus familiaris (Dog).